Reading from the N-terminus, the 485-residue chain is Poly(ADP-ribose) glycohydrolase 2 (485 aa).

Belongs to the poly(ADP-ribose) glycohydrolase family. Expressed in head and tail neurons.

Its subcellular location is the cytoplasm. The catalysed reaction is [(1''-&gt;2')-ADP-alpha-D-ribose](n) + H2O = [(1''-&gt;2')-ADP-alpha-D-ribose](n-1) + ADP-D-ribose. Its function is as follows. Poly(ADP-ribose) synthesized after DNA damage is only present transiently and is rapidly degraded by poly(ADP-ribose) glycohydrolase. Poly(ADP-ribose) metabolism may be required for maintenance of the normal function of neuronal cells. This chain is Poly(ADP-ribose) glycohydrolase 2, found in Caenorhabditis elegans.